The primary structure comprises 991 residues: Translation initiation factor IF-2 (991 aa).

Disordered stretches follow at residues 126–220 (QADH…DVGE) and 325–359 (VKAAGDGDTAPAADDALAGKKKPGKKKKKPDVDEK). 2 stretches are compositionally biased toward polar residues: residues 138–160 (QTESAVQTESAVQTESAVQTEPA) and 201–210 (PAAQTESAVQ). Low complexity predominate over residues 326–340 (KAAGDGDTAPAADDA). The span at 343 to 353 (GKKKPGKKKKK) shows a compositional bias: basic residues. Positions 488 to 658 (IRPPVVTIMG…LTEAEIRELK (171 aa)) constitute a tr-type G domain. Residues 497-504 (GHVDHGKT) form a G1 region. 497–504 (GHVDHGKT) lines the GTP pocket. The interval 522 to 526 (GITQH) is G2. Residues 544-547 (DTPG) are G3. GTP-binding positions include 544–548 (DTPGH) and 598–601 (NKID). The tract at residues 598-601 (NKID) is G4. A G5 region spans residues 634 to 636 (SAK).

The protein belongs to the TRAFAC class translation factor GTPase superfamily. Classic translation factor GTPase family. IF-2 subfamily.

It is found in the cytoplasm. Functionally, one of the essential components for the initiation of protein synthesis. Protects formylmethionyl-tRNA from spontaneous hydrolysis and promotes its binding to the 30S ribosomal subunits. Also involved in the hydrolysis of GTP during the formation of the 70S ribosomal complex. The protein is Translation initiation factor IF-2 of Chlorobium phaeobacteroides (strain DSM 266 / SMG 266 / 2430).